Here is an 89-residue protein sequence, read N- to C-terminus: MALYKAQKAAIIEQFRQHENDTGSTEVQVALLTERINILTEHLREHKHDYHSRRGLMKLVGQRRRLLRYLKRTDAQRYQALIQRLGLRG.

Belongs to the universal ribosomal protein uS15 family. Part of the 30S ribosomal subunit. Forms a bridge to the 50S subunit in the 70S ribosome, contacting the 23S rRNA.

One of the primary rRNA binding proteins, it binds directly to 16S rRNA where it helps nucleate assembly of the platform of the 30S subunit by binding and bridging several RNA helices of the 16S rRNA. In terms of biological role, forms an intersubunit bridge (bridge B4) with the 23S rRNA of the 50S subunit in the ribosome. The sequence is that of Small ribosomal subunit protein uS15 from Thermomicrobium roseum (strain ATCC 27502 / DSM 5159 / P-2).